A 394-amino-acid chain; its full sequence is Acetyl-CoA acetyltransferase (394 aa).

Cys-89 serves as the catalytic Acyl-thioester intermediate. Active-site proton acceptor residues include His-350 and Cys-380.

This sequence belongs to the thiolase-like superfamily. Thiolase family. As to quaternary structure, homotetramer.

It localises to the cytoplasm. The catalysed reaction is 2 acetyl-CoA = acetoacetyl-CoA + CoA. It functions in the pathway biopolymer metabolism; poly-(R)-3-hydroxybutanoate biosynthesis. The protein operates within metabolic intermediate biosynthesis; (R)-mevalonate biosynthesis; (R)-mevalonate from acetyl-CoA: step 1/3. In Allochromatium vinosum (strain ATCC 17899 / DSM 180 / NBRC 103801 / NCIMB 10441 / D) (Chromatium vinosum), this protein is Acetyl-CoA acetyltransferase.